We begin with the raw amino-acid sequence, 320 residues long: N-acetylneuraminate lyase (320 aa).

Residues Thr51 and Thr52 each contribute to the aceneuramate site. Tyr143 acts as the Proton donor in catalysis. Lys173 (schiff-base intermediate with substrate) is an active-site residue. Aceneuramate is bound by residues Ser175, Gly199, Asp201, Glu202, and Ser218.

This sequence belongs to the DapA family. NanA subfamily. Homotetramer.

Its subcellular location is the cytoplasm. The enzyme catalyses aceneuramate = aldehydo-N-acetyl-D-mannosamine + pyruvate. It participates in amino-sugar metabolism; N-acetylneuraminate degradation. Functionally, catalyzes the cleavage of N-acetylneuraminic acid (sialic acid) to form pyruvate and N-acetylmannosamine via a Schiff base intermediate. It prevents sialic acids from being recycled and returning to the cell surface. Involved in the N-glycolylneuraminic acid (Neu5Gc) degradation pathway. The protein is N-acetylneuraminate lyase of Pongo abelii (Sumatran orangutan).